Consider the following 466-residue polypeptide: Glucose-6-phosphate 1-dehydrogenase 1 (466 aa).

NADP(+) contacts are provided by residues S48, 88-89 (DV), and K141. The substrate site is built by H171, K175, E209, and D228. H233 (proton acceptor) is an active-site residue. Residues K319 and K324 each coordinate substrate.

This sequence belongs to the glucose-6-phosphate dehydrogenase family.

The catalysed reaction is D-glucose 6-phosphate + NADP(+) = 6-phospho-D-glucono-1,5-lactone + NADPH + H(+). The protein operates within carbohydrate degradation; pentose phosphate pathway; D-ribulose 5-phosphate from D-glucose 6-phosphate (oxidative stage): step 1/3. Catalyzes the oxidation of glucose 6-phosphate to 6-phosphogluconolactone. The sequence is that of Glucose-6-phosphate 1-dehydrogenase 1 from Mycobacterium tuberculosis (strain CDC 1551 / Oshkosh).